We begin with the raw amino-acid sequence, 285 residues long: Seed agglutinin 2 (285 aa).

The N-terminal stretch at 1 to 31 is a signal peptide; the sequence is MASYKFKTQNSFLLLLSISFFFLLLLNKVNS. Asparagine 147 is a glycosylation site (N-linked (GlcNAc...) asparagine). Mn(2+) is bound by residues glutamate 156 and aspartate 158. Ca(2+) contacts are provided by aspartate 158, asparagine 162, and aspartate 166. Mn(2+)-binding residues include aspartate 166 and histidine 171.

The protein belongs to the leguminous lectin family. In terms of assembly, homotetramer. Mostly found in non-glycosylated form. As to expression, expressed in seed.

Its function is as follows. Seed lectin. This chain is Seed agglutinin 2, found in Robinia pseudoacacia (Black locust).